A 457-amino-acid chain; its full sequence is MDSFKVVLEGPAPWGFRLQGGKDFNVPLSISRLTPGGKAAQAGVAVGDWVLSIDGENAGSLTHIEAQNKIRACGERLSLGLSRAQPAQSKPQKALTPPADPPRYTFAPSASLNKTARPFGAPPPTDSALSQNGQLLRQLVPDASKQRLMENTEDWRPRPGTGQSRSFRILAHLTGTEFMQDPDEEFMKKSSQVPRTEAPAPASTIPQESWPGPTTPSPTSRPPWAVDPAFAERYAPDKTSTVLTRHSQPATPTPLQNRTSIVQAAAGGGTGGGSNNGKTPVCHQCHKIIRGRYLVALGHAYHPEEFVCSQCGKVLEEGGFFEEKGAIFCPSCYDVRYAPSCAKCKKKITGEIMHALKMTWHVPCFTCAACKTPIRNRAFYMEEGAPYCERDYEKMFGTKCRGCDFKIDAGDRFLEALGFSWHDTCFVCAICQINLEGKTFYSKKDKPLCKSHAFSHV.

The PDZ domain maps to 1–85; it reads MDSFKVVLEG…RLSLGLSRAQ (85 aa). Residue S78 is modified to Phosphoserine. Disordered regions lie at residues 81–132 and 186–226; these read LSRA…LSQN and FMKK…PWAV. Residue T96 is modified to Phosphothreonine. Position 103 is an asymmetric dimethylarginine (R103). S111 carries the post-translational modification Phosphoserine. S247 is modified (phosphoserine). 3 LIM zinc-binding domains span residues 280–338, 339–398, and 399–457; these read PVCH…VRYA, PSCA…MFGT, and KCRG…FSHV.

In terms of assembly, binds via its LIM zinc-binding 3 domain (LIM 3) domain to endocytic codes of INSR, but not with those of IGF1R, LDLR, TFRC, or EGFR. Interacts with various PKC isoforms through the LIM zinc-binding domains. Binds to RET in a phosphorylation-independent manner via its LIM zinc-binding 2 domain (LIM 2). Probably part of a complex with SHC and the RET dimer. Interacts with TPM2, TBX4 and TBX5. Interacts (via LIM domains) with SIPA1L1. Expressed in kidney, heart, brain, lung, and skeletal muscle. Overexpression results in the synthesis of an unidentified soluble factor which acts on cells in the osteoblast lineage causing them to differentiate and secrete BMP-2.

The protein localises to the cytoplasm. Its subcellular location is the cytoskeleton. May function as a scaffold on which the coordinated assembly of proteins can occur. May play a role as an adapter that, via its PDZ domain, localizes LIM-binding proteins to actin filaments of both skeletal muscle and nonmuscle tissues. Involved in both of the two fundamental mechanisms of bone formation, direct bone formation (e.g. embryonic flat bones mandible and cranium), and endochondral bone formation (e.g. embryonic long bone development). Plays a role during fracture repair. Involved in BMP6 signaling pathway. The polypeptide is PDZ and LIM domain protein 7 (Pdlim7) (Rattus norvegicus (Rat)).